The chain runs to 307 residues: Type 2A encapsulin shell protein (307 aa).

It belongs to the encapsulin family. Family 2A subfamily. In terms of assembly, homooligomeric. The encapsulin nanocompartment is formed by 60 subunits; monomers form pentamers which assemble to form shells. There are 12 charged pores where the pentamers meet as well as 3-fold axis channels and dimer channels.

It localises to the encapsulin nanocompartment. In terms of biological role, shell component of a type 2A encapsulin nanocompartment. Forms encapsulin nanocompartments about 24 nm in diameter from 60 monomers. Probably encapsulates at least cysteine desulfurase (CyD) and allows passage of cysteine into its interior, probably involved in sulfur metabolism. This is Type 2A encapsulin shell protein from Mycobacterium avium.